The sequence spans 102 residues: Large ribosomal subunit protein uL24 (102 aa).

This sequence belongs to the universal ribosomal protein uL24 family. As to quaternary structure, part of the 50S ribosomal subunit.

In terms of biological role, one of two assembly initiator proteins, it binds directly to the 5'-end of the 23S rRNA, where it nucleates assembly of the 50S subunit. One of the proteins that surrounds the polypeptide exit tunnel on the outside of the subunit. The chain is Large ribosomal subunit protein uL24 from Cupriavidus pinatubonensis (strain JMP 134 / LMG 1197) (Cupriavidus necator (strain JMP 134)).